Here is a 126-residue protein sequence, read N- to C-terminus: Large ribosomal subunit protein bL12 (126 aa).

This sequence belongs to the bacterial ribosomal protein bL12 family. Homodimer. Part of the ribosomal stalk of the 50S ribosomal subunit. Forms a multimeric L10(L12)X complex, where L10 forms an elongated spine to which 2 to 4 L12 dimers bind in a sequential fashion. Binds GTP-bound translation factors.

Its function is as follows. Forms part of the ribosomal stalk which helps the ribosome interact with GTP-bound translation factors. Is thus essential for accurate translation. The protein is Large ribosomal subunit protein bL12 of Tropheryma whipplei (strain TW08/27) (Whipple's bacillus).